Reading from the N-terminus, the 226-residue chain is Lipoprotein-releasing system ATP-binding protein LolD (226 aa).

An ABC transporter domain is found at 6 to 226; it reads IELKSVERHY…TLADGKVVPL (221 aa). Position 42-49 (42-49) interacts with ATP; that stretch reads APSGTGKS.

Belongs to the ABC transporter superfamily. Lipoprotein translocase (TC 3.A.1.125) family. As to quaternary structure, the complex is composed of two ATP-binding proteins (LolD) and two transmembrane proteins (LolC and LolE).

It localises to the cell inner membrane. Part of the ABC transporter complex LolCDE involved in the translocation of mature outer membrane-directed lipoproteins, from the inner membrane to the periplasmic chaperone, LolA. Responsible for the formation of the LolA-lipoprotein complex in an ATP-dependent manner. The polypeptide is Lipoprotein-releasing system ATP-binding protein LolD (Mesorhizobium japonicum (strain LMG 29417 / CECT 9101 / MAFF 303099) (Mesorhizobium loti (strain MAFF 303099))).